The sequence spans 101 residues: Small ribosomal subunit protein uS14 (101 aa).

Residues 1-10 (MAKKSSVEKN) show a composition bias toward basic and acidic residues. A disordered region spans residues 1-23 (MAKKSSVEKNNRRKRMAKNAAPK). Residues 11–23 (NRRKRMAKNAAPK) show a composition bias toward basic residues.

This sequence belongs to the universal ribosomal protein uS14 family. Part of the 30S ribosomal subunit. Contacts proteins S3 and S10.

Functionally, binds 16S rRNA, required for the assembly of 30S particles and may also be responsible for determining the conformation of the 16S rRNA at the A site. This chain is Small ribosomal subunit protein uS14, found in Bradyrhizobium sp. (strain BTAi1 / ATCC BAA-1182).